The primary structure comprises 371 residues: UDP-N-acetylglucosamine--N-acetylmuramyl-(pentapeptide) pyrophosphoryl-undecaprenol N-acetylglucosamine transferase (371 aa).

Residues 10-12 (TGG), Asn-124, Arg-166, Ser-196, and Gln-301 each bind UDP-N-acetyl-alpha-D-glucosamine.

Belongs to the glycosyltransferase 28 family. MurG subfamily.

It localises to the cell membrane. The enzyme catalyses di-trans,octa-cis-undecaprenyl diphospho-N-acetyl-alpha-D-muramoyl-L-alanyl-D-glutamyl-meso-2,6-diaminopimeloyl-D-alanyl-D-alanine + UDP-N-acetyl-alpha-D-glucosamine = di-trans,octa-cis-undecaprenyl diphospho-[N-acetyl-alpha-D-glucosaminyl-(1-&gt;4)]-N-acetyl-alpha-D-muramoyl-L-alanyl-D-glutamyl-meso-2,6-diaminopimeloyl-D-alanyl-D-alanine + UDP + H(+). It participates in cell wall biogenesis; peptidoglycan biosynthesis. Cell wall formation. Catalyzes the transfer of a GlcNAc subunit on undecaprenyl-pyrophosphoryl-MurNAc-pentapeptide (lipid intermediate I) to form undecaprenyl-pyrophosphoryl-MurNAc-(pentapeptide)GlcNAc (lipid intermediate II). This Moorella thermoacetica (strain ATCC 39073 / JCM 9320) protein is UDP-N-acetylglucosamine--N-acetylmuramyl-(pentapeptide) pyrophosphoryl-undecaprenol N-acetylglucosamine transferase.